The chain runs to 304 residues: Aspartate carbamoyltransferase catalytic subunit (304 aa).

Residues R55 and T56 each contribute to the carbamoyl phosphate site. K84 is a binding site for L-aspartate. Carbamoyl phosphate contacts are provided by R105, H133, and Q136. 2 residues coordinate L-aspartate: R165 and R226. Carbamoyl phosphate contacts are provided by L265 and P266.

The protein belongs to the aspartate/ornithine carbamoyltransferase superfamily. ATCase family. Heterooligomer of catalytic and regulatory chains.

The enzyme catalyses carbamoyl phosphate + L-aspartate = N-carbamoyl-L-aspartate + phosphate + H(+). It functions in the pathway pyrimidine metabolism; UMP biosynthesis via de novo pathway; (S)-dihydroorotate from bicarbonate: step 2/3. Functionally, catalyzes the condensation of carbamoyl phosphate and aspartate to form carbamoyl aspartate and inorganic phosphate, the committed step in the de novo pyrimidine nucleotide biosynthesis pathway. This chain is Aspartate carbamoyltransferase catalytic subunit, found in Methanothrix thermoacetophila (strain DSM 6194 / JCM 14653 / NBRC 101360 / PT) (Methanosaeta thermophila).